We begin with the raw amino-acid sequence, 372 residues long: MTIPFQSSTAPTLGVEMELQIIDPATGNLTPRGPELVTFCEEHPEVGLVVKPELVQATIEINTGICKDVAQVERDLTTQLTLLRSVCRERGVSFLSAGTHPFARWRERRYTQTPRYRALVDKHVWTARRMQIYGLHVHVGMPDGDTAIQVINQITQYAPMLLALSANSPFWEGDDTGLDSCRTKVFENLSSAGLPFRFENWEGYENLINVLLETGSIGSQREIWWDIRPHSDFGTIEVRICDATRTLAEVLALTALVQCLAVYFRRLYENGEEIRLLHPGIIRENKWRACRWGLEGELIDPLTLKGVPTRKLIEQTVGEMQSLAAELGCSAYLAAIPAILASGNGATRQRRIYSQSRSLVAVVADLEAGLAT.

This sequence belongs to the glutamate--cysteine ligase type 2 family. YbdK subfamily.

The catalysed reaction is L-cysteine + L-glutamate + ATP = gamma-L-glutamyl-L-cysteine + ADP + phosphate + H(+). ATP-dependent carboxylate-amine ligase which exhibits weak glutamate--cysteine ligase activity. The sequence is that of Putative glutamate--cysteine ligase 2 from Gloeobacter violaceus (strain ATCC 29082 / PCC 7421).